Reading from the N-terminus, the 349-residue chain is Anthranilate phosphoribosyltransferase (349 aa).

5-phospho-alpha-D-ribose 1-diphosphate contacts are provided by residues Gly-82, Gly-85–Asp-86, Asn-92–Thr-95, Lys-110–Ser-118, and Ser-122. An anthranilate-binding site is contributed by Gly-82. Ser-94 contacts Mg(2+). Asn-113 contacts anthranilate. An anthranilate-binding site is contributed by Arg-168. Residues Asp-227 and Glu-228 each coordinate Mg(2+).

Belongs to the anthranilate phosphoribosyltransferase family. As to quaternary structure, homodimer. Mg(2+) is required as a cofactor.

The catalysed reaction is N-(5-phospho-beta-D-ribosyl)anthranilate + diphosphate = 5-phospho-alpha-D-ribose 1-diphosphate + anthranilate. It participates in amino-acid biosynthesis; L-tryptophan biosynthesis; L-tryptophan from chorismate: step 2/5. In terms of biological role, catalyzes the transfer of the phosphoribosyl group of 5-phosphorylribose-1-pyrophosphate (PRPP) to anthranilate to yield N-(5'-phosphoribosyl)-anthranilate (PRA). The protein is Anthranilate phosphoribosyltransferase of Acinetobacter baylyi (strain ATCC 33305 / BD413 / ADP1).